Here is a 169-residue protein sequence, read N- to C-terminus: Small ribosomal subunit protein uS9 (169 aa).

2 disordered regions span residues 1 to 29 (MVEP…TETP) and 128 to 169 (MDPE…YSKR). Over residues 9–21 (DVQEYDENSEEYP) the composition is skewed to acidic residues. Basic residues predominate over residues 150–169 (VERKKAGLKKARKAPQYSKR).

The protein belongs to the universal ribosomal protein uS9 family.

In Thermobifida fusca (strain YX), this protein is Small ribosomal subunit protein uS9.